A 255-amino-acid polypeptide reads, in one-letter code: Ribonuclease HII (255 aa).

The RNase H type-2 domain occupies 72-255 (RLIAGIDEVG…RTFAPIKDMI (184 aa)). Residues Asp-78, Glu-79, and Asp-170 each contribute to the a divalent metal cation site.

It belongs to the RNase HII family. Mn(2+) is required as a cofactor. Requires Mg(2+) as cofactor.

It localises to the cytoplasm. It carries out the reaction Endonucleolytic cleavage to 5'-phosphomonoester.. Its function is as follows. Endonuclease that specifically degrades the RNA of RNA-DNA hybrids. This chain is Ribonuclease HII, found in Enterococcus faecalis (strain ATCC 700802 / V583).